The sequence spans 103 residues: Co-chaperonin GroES (103 aa).

The protein belongs to the GroES chaperonin family. Heptamer of 7 subunits arranged in a ring. Interacts with the chaperonin GroEL.

Its subcellular location is the cytoplasm. Together with the chaperonin GroEL, plays an essential role in assisting protein folding. The GroEL-GroES system forms a nano-cage that allows encapsulation of the non-native substrate proteins and provides a physical environment optimized to promote and accelerate protein folding. GroES binds to the apical surface of the GroEL ring, thereby capping the opening of the GroEL channel. This is Co-chaperonin GroES from Prochlorococcus marinus subsp. pastoris (strain CCMP1986 / NIES-2087 / MED4).